The primary structure comprises 201 residues: Peptidyl-tRNA hydrolase (201 aa).

Residue tyrosine 15 coordinates tRNA. Histidine 20 (proton acceptor) is an active-site residue. 3 residues coordinate tRNA: tyrosine 66, asparagine 68, and asparagine 114.

The protein belongs to the PTH family. Monomer.

It localises to the cytoplasm. The enzyme catalyses an N-acyl-L-alpha-aminoacyl-tRNA + H2O = an N-acyl-L-amino acid + a tRNA + H(+). In terms of biological role, hydrolyzes ribosome-free peptidyl-tRNAs (with 1 or more amino acids incorporated), which drop off the ribosome during protein synthesis, or as a result of ribosome stalling. Its function is as follows. Catalyzes the release of premature peptidyl moieties from peptidyl-tRNA molecules trapped in stalled 50S ribosomal subunits, and thus maintains levels of free tRNAs and 50S ribosomes. The polypeptide is Peptidyl-tRNA hydrolase (Burkholderia mallei (strain ATCC 23344)).